A 375-amino-acid chain; its full sequence is MIEADYLVIGAGIAGASTGYWLSAHGRVVVLEREAQPGYHSTGRSAAHYTVAYGTPQVRALTAASRAFFDNPPAGFCEHPLLSPRPEMVVDFSDDPEELRRQYESGKALVPQMRLLDAEQACSIVPVLRRDKVFGATYDPTGADIDTDALHQGYLRGIRRNQGQVLCNHEALEIRRVDGAWEVRCDAGSYRAAVLVNAAGAWCDAIAGLAGVRPLGLQPKRRSAFIFAPPPGIDCHDWPMLVSLDESFYLKPDAGMLLGSPANADPVEAHDVQPEQLDIATGMYLIEEATTLTIRRPEHTWAGLRSFVADGDLVAGYAANAEGFFWVAAQGGYGIQTSAAMGEASAALIRHQPLPAHLREHGLDEAMLSPRRLSP.

Residues Ala-14, 32–33, 41–48, Ala-171, and 331–336 each bind FAD; these read ER, STGRSAAH, and GGYGIQ.

It belongs to the FAD-dependent glycerol-3-phosphate dehydrogenase family. In terms of assembly, monomer. FAD serves as cofactor.

It catalyses the reaction D-arginine + A + H2O = 5-guanidino-2-oxopentanoate + AH2 + NH4(+). It carries out the reaction a D-alpha-amino acid + A + H2O = a 2-oxocarboxylate + AH2 + NH4(+). Inhibited by D-arginine and D-lysine at high concentration. Functionally, dauA is highly expressed within the cystic fibrosis (CF) lung, and it is required for virulence via the optimal production of hydrogen cyanide, pyocyanine, pyoverdine, rhamnolipid and alginate during biofilm formation. Involved in the catabolism of D-lysine and D-arginine. Under aerobic conditions, the arginine succinyltransferase (AST) and arginine transaminase (ATA) pathways are 2 major routes for L-arginine utilization as the sole source of carbon and nitrogen. The D-to-L racemization of arginine by DauA and DauB is necessary, before to be channeled into the AST and/or ATA pathways. DauA catalyzes the flavin-dependent oxidative deamination of D-arginine into 2-ketoarginine (2-KA) and ammonia. It also has dehydrogenase activity towards D-lysine, D-tyrosine, D-methionine, D-phenylalanine, D-ornithine, D-histidine and D-leucine as substrates. The chain is FAD-dependent catabolic D-arginine dehydrogenase DauA from Pseudomonas aeruginosa (strain ATCC 15692 / DSM 22644 / CIP 104116 / JCM 14847 / LMG 12228 / 1C / PRS 101 / PAO1).